Here is a 164-residue protein sequence, read N- to C-terminus: Protein-export protein SecB (164 aa).

Belongs to the SecB family. Homotetramer, a dimer of dimers. One homotetramer interacts with 1 SecA dimer.

The protein localises to the cytoplasm. One of the proteins required for the normal export of preproteins out of the cell cytoplasm. It is a molecular chaperone that binds to a subset of precursor proteins, maintaining them in a translocation-competent state. It also specifically binds to its receptor SecA. This is Protein-export protein SecB from Shewanella denitrificans (strain OS217 / ATCC BAA-1090 / DSM 15013).